A 246-amino-acid polypeptide reads, in one-letter code: 23S rRNA (guanosine-2'-O-)-methyltransferase RlmB (246 aa).

S-adenosyl-L-methionine contacts are provided by Gly-196, Ile-216, and Leu-225.

It belongs to the class IV-like SAM-binding methyltransferase superfamily. RNA methyltransferase TrmH family. RlmB subfamily. In terms of assembly, homodimer.

The protein localises to the cytoplasm. It catalyses the reaction guanosine(2251) in 23S rRNA + S-adenosyl-L-methionine = 2'-O-methylguanosine(2251) in 23S rRNA + S-adenosyl-L-homocysteine + H(+). In terms of biological role, specifically methylates the ribose of guanosine 2251 in 23S rRNA. This chain is 23S rRNA (guanosine-2'-O-)-methyltransferase RlmB, found in Yersinia pestis.